A 306-amino-acid chain; its full sequence is Nod factor export ATP-binding protein I (306 aa).

Residues 8–238 (IDLVGVRKSF…HIGCNVIEIY (231 aa)) form the ABC transporter domain. 40–47 (GPNGAGKS) is a binding site for ATP.

This sequence belongs to the ABC transporter superfamily. Lipooligosaccharide exporter (TC 3.A.1.102) family. In terms of assembly, the complex is composed of two ATP-binding proteins (NodI) and two transmembrane proteins (NodJ).

It is found in the cell inner membrane. In terms of biological role, part of the ABC transporter complex NodIJ involved in the export of the nodulation factors (Nod factors), the bacterial signal molecules that induce symbiosis and subsequent nodulation induction. Nod factors are LCO (lipo-chitin oligosaccharide), a modified beta-1,4-linked N-acetylglucosamine oligosaccharide. This subunit is responsible for energy coupling to the transport system. The chain is Nod factor export ATP-binding protein I from Bradyrhizobium diazoefficiens (strain JCM 10833 / BCRC 13528 / IAM 13628 / NBRC 14792 / USDA 110).